A 215-amino-acid chain; its full sequence is Cytochrome b6 (215 aa).

The helical transmembrane segment at 32–52 threads the bilayer; that stretch reads IFYCLGGITLTCFLVQVATGF. Cysteine 35 is a heme c binding site. Positions 86 and 100 each coordinate heme b. The next 3 helical transmembrane spans lie at 90-110, 116-136, and 186-206; these read ASMM…TGGF, LTWV…VTGY, and LHTF…FLMI. Residues histidine 187 and histidine 202 each contribute to the heme b site.

Belongs to the cytochrome b family. PetB subfamily. In terms of assembly, the 4 large subunits of the cytochrome b6-f complex are cytochrome b6, subunit IV (17 kDa polypeptide, PetD), cytochrome f and the Rieske protein, while the 4 small subunits are PetG, PetL, PetM and PetN. The complex functions as a dimer. It depends on heme b as a cofactor. Heme c is required as a cofactor.

The protein resides in the plastid. The protein localises to the chloroplast thylakoid membrane. Functionally, component of the cytochrome b6-f complex, which mediates electron transfer between photosystem II (PSII) and photosystem I (PSI), cyclic electron flow around PSI, and state transitions. In Eucalyptus globulus subsp. globulus (Tasmanian blue gum), this protein is Cytochrome b6.